The primary structure comprises 71 residues: ATP synthase F(0) complex subunit e, mitochondrial (71 aa).

Position 34 is an N6-acetyllysine (lysine 34). Serine 68 is modified (phosphoserine).

Belongs to the ATPase e subunit family. In terms of assembly, component of the ATP synthase complex composed at least of ATP5F1A/subunit alpha, ATP5F1B/subunit beta, ATP5MC1/subunit c (homooctomer), MT-ATP6/subunit a, MT-ATP8/subunit 8, ATP5ME/subunit e, ATP5MF/subunit f, ATP5MG/subunit g, ATP5MK/subunit k, ATP5MJ/subunit j, ATP5F1C/subunit gamma, ATP5F1D/subunit delta, ATP5F1E/subunit epsilon, ATP5PF/subunit F6, ATP5PB/subunit b, ATP5PD/subunit d, ATP5PO/subunit OSCP. ATP synthase complex consists of a soluble F(1) head domain (subunits alpha(3) and beta(3)) - the catalytic core - and a membrane F(0) domain - the membrane proton channel (subunits c, a, 8, e, f, g, k and j). These two domains are linked by a central stalk (subunits gamma, delta, and epsilon) rotating inside the F1 region and a stationary peripheral stalk (subunits F6, b, d, and OSCP).

Its subcellular location is the mitochondrion. It is found in the mitochondrion inner membrane. In terms of biological role, subunit e, of the mitochondrial membrane ATP synthase complex (F(1)F(0) ATP synthase or Complex V) that produces ATP from ADP in the presence of a proton gradient across the membrane which is generated by electron transport complexes of the respiratory chain. ATP synthase complex consist of a soluble F(1) head domain - the catalytic core - and a membrane F(1) domain - the membrane proton channel. These two domains are linked by a central stalk rotating inside the F(1) region and a stationary peripheral stalk. During catalysis, ATP synthesis in the catalytic domain of F(1) is coupled via a rotary mechanism of the central stalk subunits to proton translocation. In vivo, can only synthesize ATP although its ATP hydrolase activity can be activated artificially in vitro. Part of the complex F(0) domain. The sequence is that of ATP synthase F(0) complex subunit e, mitochondrial from Pongo abelii (Sumatran orangutan).